A 62-amino-acid polypeptide reads, in one-letter code: Large ribosomal subunit protein bL28 (62 aa).

The protein belongs to the bacterial ribosomal protein bL28 family.

The sequence is that of Large ribosomal subunit protein bL28 from Acidothermus cellulolyticus (strain ATCC 43068 / DSM 8971 / 11B).